We begin with the raw amino-acid sequence, 1074 residues long: Probable arabinosyltransferase C (1074 aa).

The next 10 helical transmembrane spans lie at 15-37, 214-236, 251-273, 415-437, 452-474, 516-538, 573-595, 608-630, 645-667, and 684-706; these read ARLV…PLLP, LLKL…ALHV, SRWW…WHFV, IIIG…ALLV, RFGY…FLIF, SVAR…AMTL, THQF…VAVT, FGAA…WYVS, FGFT…WFHF, and LLVA…SLTL.

Belongs to the emb family.

It localises to the cell membrane. Its function is as follows. Arabinosyl transferase responsible for the polymerization of arabinose into the arabinan of arabinogalactan. In Mycolicibacterium smegmatis (Mycobacterium smegmatis), this protein is Probable arabinosyltransferase C (embC).